The chain runs to 927 residues: MNPLSAVFNSVVLVLLALGVTDVFFSYESSRCSMTYMFEYPQYLQIKLSKKVSRLYPLYELYLYGEGSYAEENKNLTLTGVPVLFLPGNAGSYKQARSFASVALRKAENIGNRYHFNIFTVNFNEELVALYGGSLRRQTRFVHECIKTILSLYKNQTFPPESVAIIGHSMGGLVARALFTLKHFKPDLINVIITQATPHILPVLSTDIYLTDFYTMVNNYWIYNSLKLRNITMLSVAGGYSDYQVRSGLTFLPTSSFHTSALSVVSSAVPITWASTDHLSIVWCRELVLVTARALFDLIDEHTKQINIDPQSRMSVIKHHFVRHPAKHLESRHQITASFTETPKFTLVEDSKWTYTVNKESNESFFLFPLLDKRIAYSHFHCQNTFLYTHSWIFGCNKTVSPKCLQINDLSWETELLPSAKVVNLKLDVYSNLSHFILYIPATNGSKFSVECEFLSEEARTVHVPVTHVLSFGFSSSHAPLNSSGLLYVIQFEDFSKIYQAFNVFIVRNCGQNKESKSSIYKFHVPWSHEDLIGVLSDELPVRISAKLHAEQPQNDNRLVKLFLYASPECLHEVTISTSFSQILGQIVRFHGIYLPVYIVANLLLAYGAQLHSILIQGSCMDLDLSFDVAAKPYKVDPVLIICKYLLNYKWFKNYWDGLMLPQLDAVQLHAYGFWFPLASLFFFIFGTSIAYWSSIGLQAAVRILSSLWIYLKRPSMFPKESKCITYRVYAETLFFAFISWRSCGTFSLLLVFLRYLSKVLILYSSMKNYVSLNAHIVKDTSSKQDSVKTDSDTNINSNQLTHHQPSSLEIKALDDCLKMHFTILHLNLWIVLLGLPSFIYWLKTLRYTIQLDPDPNRVSALVLIFILEILMNSTTSAIKSSVCLKTAAVLQLPLSIIVVAFGTLHLYRISNLIAFSLFLHVVCCFV.

Residues 1–4 are Cytoplasmic-facing; it reads MNPL. A helical membrane pass occupies residues 5-25; sequence SAVFNSVVLVLLALGVTDVFF. Topologically, residues 26-595 are lumenal; it reads SYESSRCSMT…QIVRFHGIYL (570 aa). Asn75 and Asn155 each carry an N-linked (GlcNAc...) asparagine glycan. Residue Ser169 is part of the active site. 6 N-linked (GlcNAc...) asparagine glycosylation sites follow: Asn230, Asn362, Asn397, Asn432, Asn444, and Asn482. A helical membrane pass occupies residues 596-616; that stretch reads PVYIVANLLLAYGAQLHSILI. The Cytoplasmic segment spans residues 617–672; the sequence is QGSCMDLDLSFDVAAKPYKVDPVLIICKYLLNYKWFKNYWDGLMLPQLDAVQLHAY. A helical membrane pass occupies residues 673-693; it reads GFWFPLASLFFFIFGTSIAYW. The Lumenal portion of the chain corresponds to 694-733; that stretch reads SSIGLQAAVRILSSLWIYLKRPSMFPKESKCITYRVYAET. The helical transmembrane segment at 734-754 threads the bilayer; it reads LFFAFISWRSCGTFSLLLVFL. Over 755–821 the chain is Cytoplasmic; that stretch reads RYLSKVLILY…KALDDCLKMH (67 aa). The chain crosses the membrane as a helical span at residues 822–842; that stretch reads FTILHLNLWIVLLGLPSFIYW. Topologically, residues 843–858 are lumenal; sequence LKTLRYTIQLDPDPNR. A helical transmembrane segment spans residues 859 to 879; that stretch reads VSALVLIFILEILMNSTTSAI. The Cytoplasmic portion of the chain corresponds to 880–887; sequence KSSVCLKT. A helical membrane pass occupies residues 888 to 908; the sequence is AAVLQLPLSIIVVAFGTLHLY. The Lumenal segment spans residues 909–927; sequence RISNLIAFSLFLHVVCCFV.

It belongs to the GPI inositol-deacylase family.

It localises to the endoplasmic reticulum membrane. Functionally, GPI inositol-deacylase that catalyzes the remove of the acyl chain linked to the 2-OH position of inositol ring from the GPI-anchored protein (GPI-AP) in the endoplasmic reticulum. Initiates the post-attachment remodeling phase of GPI-AP biogenesis and participates in endoplasmic reticulum (ER)-to-Golgi transport of GPI-anchored protein. This chain is GPI inositol-deacylase, found in Xenopus laevis (African clawed frog).